A 672-amino-acid polypeptide reads, in one-letter code: MSKAFKLTSKFKPSGDQPQAIEKLVAGLEDGLAYQTLLGVTGSGKTFTIANAIEKVQRPTLILEPNKTLAAQFYAEMREFFPENAVEYFVSYYDYYQPEAYVPSSDTYIEKDASINDHIEQMRLSATKAITERHDTIIIATVSAIYGLGDPDSYLKMLLHLTRGDQIDQRKILQRLAELQYTRNDLELRRATYRVNGDIIDIYPADSEREAVRVELFDDEVENLSYFDPLTGEMLRRVPRITVYPKTHYVTPREKLLSTLDQIKIELKERLSQLEKANKLVERQRLEQRTKFDMEMILELGYCSGIENYSRYLSGRNEGEPPPTLIDYLPKDALLIIDESHVTIPQLGGMYRGDRARKETLVEYGFRLPSALDNRPLRFDEFEKLAPQTIFISATPGPYEEKQSDQVVELLVRPTGLIDPEIEVRPVATQVDDLLSEIKKRAAQNERVLVTTLTKRMAEDLTEYFTEHNVRVRYLHSDIDTVERVEIIRDLRLGVFDVLVGINLLREGLDIPEVSLVAILDADKEGFLRSERSLIQTMGRAARNVHGKAILYADRITDSMKRAMEEAERRRIAQSAYNEKHHITPKSIQKAVTEIIEGARTYTERGRFVNQAQLIAEEEAKYIAMTPKQLAKELRKLEEQMYHHARNLEFEEAAAVRDKIQHIRKGLLEVKE.

One can recognise a Helicase ATP-binding domain in the interval 26-181 (AGLEDGLAYQ…ILQRLAELQY (156 aa)). Residue 39–46 (GVTGSGKT) coordinates ATP. The Beta-hairpin signature appears at 92–115 (YYDYYQPEAYVPSSDTYIEKDASI). The Helicase C-terminal domain maps to 430–592 (QVDDLLSEIK…ITPKSIQKAV (163 aa)). A UVR domain is found at 631-666 (AKELRKLEEQMYHHARNLEFEEAAAVRDKIQHIRKG).

The protein belongs to the UvrB family. As to quaternary structure, forms a heterotetramer with UvrA during the search for lesions. Interacts with UvrC in an incision complex.

The protein localises to the cytoplasm. The UvrABC repair system catalyzes the recognition and processing of DNA lesions. A damage recognition complex composed of 2 UvrA and 2 UvrB subunits scans DNA for abnormalities. Upon binding of the UvrA(2)B(2) complex to a putative damaged site, the DNA wraps around one UvrB monomer. DNA wrap is dependent on ATP binding by UvrB and probably causes local melting of the DNA helix, facilitating insertion of UvrB beta-hairpin between the DNA strands. Then UvrB probes one DNA strand for the presence of a lesion. If a lesion is found the UvrA subunits dissociate and the UvrB-DNA preincision complex is formed. This complex is subsequently bound by UvrC and the second UvrB is released. If no lesion is found, the DNA wraps around the other UvrB subunit that will check the other stand for damage. The sequence is that of UvrABC system protein B from Coxiella burnetii (strain CbuG_Q212) (Coxiella burnetii (strain Q212)).